Consider the following 212-residue polypeptide: Large ribosomal subunit protein uL3 (212 aa).

The disordered stretch occupies residues 136-155 (THGNSLSHRSNGSIGQNQTP). Glutamine 153 bears the N5-methylglutamine mark.

Belongs to the universal ribosomal protein uL3 family. In terms of assembly, part of the 50S ribosomal subunit. Forms a cluster with proteins L14 and L19. In terms of processing, methylated by PrmB.

Its function is as follows. One of the primary rRNA binding proteins, it binds directly near the 3'-end of the 23S rRNA, where it nucleates assembly of the 50S subunit. This Shewanella baltica (strain OS223) protein is Large ribosomal subunit protein uL3.